A 219-amino-acid chain; its full sequence is PKHD-type hydroxylase SYNPCC7002_A2658 (219 aa).

Positions T78–S172 constitute a Fe2OG dioxygenase domain. Fe cation contacts are provided by H96, D98, and H153. R163 contacts 2-oxoglutarate.

It depends on Fe(2+) as a cofactor. L-ascorbate is required as a cofactor.

The chain is PKHD-type hydroxylase SYNPCC7002_A2658 from Picosynechococcus sp. (strain ATCC 27264 / PCC 7002 / PR-6) (Agmenellum quadruplicatum).